A 313-amino-acid chain; its full sequence is D-alanine--D-alanine ligase (313 aa).

The ATP-grasp domain occupies 108–308 (KLVWQQLGIP…YQELVVKVLA (201 aa)). 138-193 (VAKLGLPLFVKPASEGSSVAVIKVKTADALVPALEEAVKFDKIVVVEKSIEGGGEY) serves as a coordination point for ATP. Positions 262, 275, and 277 each coordinate Mg(2+).

Belongs to the D-alanine--D-alanine ligase family. Requires Mg(2+) as cofactor. Mn(2+) serves as cofactor.

It is found in the cytoplasm. It carries out the reaction 2 D-alanine + ATP = D-alanyl-D-alanine + ADP + phosphate + H(+). It participates in cell wall biogenesis; peptidoglycan biosynthesis. Its function is as follows. Cell wall formation. This chain is D-alanine--D-alanine ligase, found in Paraburkholderia phymatum (strain DSM 17167 / CIP 108236 / LMG 21445 / STM815) (Burkholderia phymatum).